Consider the following 373-residue polypeptide: 3 beta-hydroxysteroid dehydrogenase/Delta 5--&gt;4-isomerase type 4 (373 aa).

Tyrosine 155 serves as the catalytic Proton acceptor. An NAD(+)-binding site is contributed by lysine 159. Residues 288 to 308 (LPLLYWLAFLLEIVSFFLHPV) traverse the membrane as a helical segment. Lysine 350 is subject to N6-acetyllysine.

This sequence belongs to the 3-beta-HSD family. As to expression, skin, placenta, also detectable in ovary and adrenal gland.

Its subcellular location is the endoplasmic reticulum membrane. The protein resides in the mitochondrion membrane. It catalyses the reaction a 3beta-hydroxy-Delta(5)-steroid + NAD(+) = a 3-oxo-Delta(5)-steroid + NADH + H(+). The enzyme catalyses a 3-oxo-Delta(5)-steroid = a 3-oxo-Delta(4)-steroid. Its pathway is lipid metabolism; steroid biosynthesis. In terms of biological role, 3-beta-HSD is a bifunctional enzyme, that catalyzes the oxidative conversion of Delta(5)-ene-3-beta-hydroxy steroid, and the oxidative conversion of ketosteroids. The 3-beta-HSD enzymatic system plays a crucial role in the biosynthesis of all classes of hormonal steroids. The sequence is that of 3 beta-hydroxysteroid dehydrogenase/Delta 5--&gt;4-isomerase type 4 (Hsd3b6) from Rattus norvegicus (Rat).